The primary structure comprises 1386 residues: MYPNWGRYGGSSHYPPPPVPPPPPPVALPEASPGPGYSSSTAPAAPSSSGFMSFREQHLAQLQQLQQMHQKQMQCVLQPHHLPPPPLPPPPVMPGGGYGDWQPPPPPMPPPPGPALSYQKQQQYKHQMIHHQRDGPPGLVPMELESPPESPPVPPGSYMPPSQSYMPPPQPPPSYYPPSSAQPYLPPAQPGPSKPQLPPPPSIPSGNKTAIQQEPLESGAKNKTAEQKQAAPEPDPSTMTPQEQQQYWYRQHLLSLQQRTKVHLPGHKKGLVTAKDVPEPIKEEAPGPAASQVAEPLAAEKPPLPPPNEEAPPPLSPEEPQSEDSEDSEDSEEDARFKQLKAIAAHWQAAAAHWQQQQQQRVGFQYQGIMQRHTQLQQILQQYQQVIQHSPHIQTMSLDVQLRHYEMQQQQFQHLFQDWEREFQLWEEQLHSYPHKDQLQEYEKQWKTWQGHMKATQTYLQEKVNSFQTVKSQYLGNMAMPPPFVPYSQMPPPLPTMPPPVLPPSLPPPVMPPALPTSIPPPGMPPPVMPPSLPTSVPPPGMPPSLSSGPPPVLPPPALSSAGSPPVLPPPALPGGPPILPLPPLSSATPPPGIPPPGAPQGMPPQLTAPLPPASGSQNSQIPEKPRQALLPTPVSFGSTPPSPYHPPPQSEQVNSKPLNKVFSSEQGLGESSALSQSIIAAKDTPVKSGGLLADPPKGSFLEGPRGPREQKEQLQKLKDFGSEPQMADHLPPPDSRLQNPSRPGMYPPPGSYRPPPPMGKPPGSIVRPSAPPARSSIPMTRPPVPIPPPPPPPPPPPPPPPVIKSKTSSVKQERWDEDSFFGLWDTNDDQGLNSEFKRDTATIPSAPVLPPPPVHSSIPPPGPMPMGMPPMSKPPPVQHTVDYGHGRDMPTNKVEQIPYGERITLRPDPLPERSTFDADHAGQRDRYDRDRDREPYFDRPSNITDHRDFKRDRETHRDRDRDRVLDYERDRFDRERRPRDDRNQSYRDKKDHSSSRRGGFDRPSYDRKSDRPPYEGPPMFGGERRTYPEERMPLPAPALGHQPPPVPRVEKKPESKNVDDILKPPGRESRPERIVVIMRGLPGSGKTHVAKLIRDKEVEFGGPAPRVLSLDDYFIAEVEKEEKDPDSGKKVKKKVMEYEYEADMEETYRTSMFKTFKKTLDDGFFPFIILDAINDRVRHFDQFWSAAKTKGFEVYLAEMSADNQTCGKRNIHGRKLKEINKMAEHWEVAPRHMMRLDIRSLLQDAAIEEVEMEDFDANIEDQKEEKKDAEEEESELGYIPKSKWEMDTSEAKLDKLDGLRTGTKRKRDWEAIASRMEDYLQLPDDYETRASEPGKKRVRWADLEEKKDADRKRAIGFVVGQTDWEKITDESGHLAERALNRTKYI.

Disordered regions lie at residues 1 to 336 (MYPN…EDAR) and 517 to 1068 (TSIP…PPGR). Positions 14–27 (YPPPPVPPPPPPVA) are enriched in pro residues. 2 stretches are compositionally biased toward low complexity: residues 31-50 (ASPGPGYSSSTAPAAPSSSG) and 59-80 (LAQLQQLQQMHQKQMQCVLQPH). Pro residues-rich tracts occupy residues 81 to 93 (HLPPPPLPPPPVM), 102 to 114 (QPPPPPMPPPPGP), 148 to 158 (PESPPVPPGSY), 166 to 176 (MPPPQPPPSYY), and 184 to 203 (YLPPAQPGPSKPQLPPPPSI). Positions 237–259 (STMTPQEQQQYWYRQHLLSLQQR) are enriched in polar residues. Basic residues predominate over residues 260–270 (TKVHLPGHKKG). The span at 276 to 285 (DVPEPIKEEA) shows a compositional bias: basic and acidic residues. A compositionally biased stretch (pro residues) spans 302–317 (PPLPPPNEEAPPPLSP). Residues 320 to 333 (PQSEDSEDSEDSEE) are compositionally biased toward acidic residues. 3 stretches are compositionally biased toward pro residues: residues 517–558 (TSIP…PPPA), 566–603 (PVLPPPALPGGPPILPLPPLSSATPPPGIPPPGAPQGM), and 641–650 (PPSPYHPPPQ). The span at 651–667 (SEQVNSKPLNKVFSSEQ) shows a compositional bias: polar residues. Lysine 683 carries the post-translational modification N6-methyllysine. Over residues 706-722 (RGPREQKEQLQKLKDFG) the composition is skewed to basic and acidic residues. Residues 746-761 (MYPPPGSYRPPPPMGK) are compositionally biased toward pro residues. A compositionally biased stretch (low complexity) spans 762-779 (PPGSIVRPSAPPARSSIP). Composition is skewed to pro residues over residues 781 to 803 (TRPPVPIPPPPPPPPPPPPPPPV) and 848 to 878 (PVLPPPPVHSSIPPPGPMPMGMPPMSKPPPV). Lysine 894 participates in a covalent cross-link: Glycyl lysine isopeptide (Lys-Gly) (interchain with G-Cter in SUMO2). Composition is skewed to basic and acidic residues over residues 904–938 (ITLRPDPLPERSTFDADHAGQRDRYDRDRDREPYF), 945–1014 (TDHR…DRPP), 1023–1033 (GERRTYPEERM), and 1049–1068 (RVEKKPESKNVDDILKPPGR). Lysine 951 is covalently cross-linked (Glycyl lysine isopeptide (Lys-Gly) (interchain with G-Cter in SUMO2)). Residues 1336–1343 (KKRVRWAD) are involved in interaction with PPP1CA.

Interacts with PPP1CA and NCOA5. Forms a complex with ILF2, ILF3, KHDRBS1, RBMX, NCOA5 and PPP1CA.

The protein localises to the nucleus. It is found in the nucleus speckle. Plays a role in the reduction of telomerase activity during differentiation of embryonic stem cells by binding to the core promoter of TERT and controlling its down-regulation. The chain is YLP motif-containing protein 1 (Ylpm1) from Mus musculus (Mouse).